A 154-amino-acid polypeptide reads, in one-letter code: 3-hydroxyacyl-[acyl-carrier-protein] dehydratase FabZ (154 aa).

His-54 is an active-site residue.

This sequence belongs to the thioester dehydratase family. FabZ subfamily.

The protein localises to the cytoplasm. It carries out the reaction a (3R)-hydroxyacyl-[ACP] = a (2E)-enoyl-[ACP] + H2O. Its function is as follows. Involved in unsaturated fatty acids biosynthesis. Catalyzes the dehydration of short chain beta-hydroxyacyl-ACPs and long chain saturated and unsaturated beta-hydroxyacyl-ACPs. The sequence is that of 3-hydroxyacyl-[acyl-carrier-protein] dehydratase FabZ from Shewanella baltica (strain OS223).